Reading from the N-terminus, the 102-residue chain is Small ribosomal subunit protein uS10 (102 aa).

It belongs to the universal ribosomal protein uS10 family. As to quaternary structure, part of the 30S ribosomal subunit.

In terms of biological role, involved in the binding of tRNA to the ribosomes. The chain is Small ribosomal subunit protein uS10 from Lactiplantibacillus plantarum (strain ATCC BAA-793 / NCIMB 8826 / WCFS1) (Lactobacillus plantarum).